The chain runs to 212 residues: Thymidylate kinase (212 aa).

Residue 7–14 participates in ATP binding; sequence GGEGCGKT.

The protein belongs to the thymidylate kinase family.

It carries out the reaction dTMP + ATP = dTDP + ADP. Its function is as follows. Phosphorylation of dTMP to form dTDP in both de novo and salvage pathways of dTTP synthesis. This chain is Thymidylate kinase, found in Gloeobacter violaceus (strain ATCC 29082 / PCC 7421).